The primary structure comprises 215 residues: Beta-crystallin A3-2 (215 aa).

The tract at residues 1 to 30 is N-terminal arm; that stretch reads MEIPAIQTEREDITSEKMAQINPLPVPLGP. 2 consecutive Beta/gamma crystallin 'Greek key' domains span residues 31–70 and 71–117; these read WKITVYDQENFQGKRMEFTSSCANIMECGFDNIRSLKVEC and GAWI…RPIC. Residues 118–123 form a connecting peptide region; the sequence is SANHEE. 2 Beta/gamma crystallin 'Greek key' domains span residues 124–165 and 166–214; these read SKLV…KVQC and GAWV…RRIQ.

This sequence belongs to the beta/gamma-crystallin family. In terms of assembly, homo/heterodimer, or complexes of higher-order. The structure of beta-crystallin oligomers seems to be stabilized through interactions between the N-terminal arms. In terms of processing, the N-terminus is blocked.

Its function is as follows. Crystallins are the dominant structural components of the vertebrate eye lens. This is Beta-crystallin A3-2 from Aquarana catesbeiana (American bullfrog).